The sequence spans 350 residues: MTDIKSLNYDELVTYMAGLGEKKFRAGQLYQWMHEKLADSFDECTNLSNALRQKLKETSEYVCLEPVRVQHSKLDGTEKYLFRLSDGNYVESVLMKYHHGNSVCISSQVGCRMGCRFCASTLNGKVRDLRPSEMLDQIYRIQKITGERVSNVVVMGSGEPMDNYDNLIKFIELLNDERGLNISQRNITVSSCGIVPKLKELADLKLQITLAISLHAPNDELRKTMMPIANKYSIEEIMDVCRYYIECTGRRISFEYSLVKGVNDSMECAKQLIELVKGMNCHINLIPVNPIKERDYKQTGKEEVYAFKNKLEKNGINVTIRREMGRDIDGACGQLRNKYMEDIDESDGGY.

Residue glutamate 91 is the Proton acceptor of the active site. Positions 97-327 (YHHGNSVCIS…VTIRREMGRD (231 aa)) constitute a Radical SAM core domain. Cysteine 104 and cysteine 332 are disulfide-bonded. The [4Fe-4S] cluster site is built by cysteine 111, cysteine 115, and cysteine 118. S-adenosyl-L-methionine-binding positions include 158–159 (GE), serine 190, 213–215 (SLH), and asparagine 289. Cysteine 332 acts as the S-methylcysteine intermediate in catalysis.

The protein belongs to the radical SAM superfamily. RlmN family. [4Fe-4S] cluster is required as a cofactor.

The protein resides in the cytoplasm. It carries out the reaction adenosine(2503) in 23S rRNA + 2 reduced [2Fe-2S]-[ferredoxin] + 2 S-adenosyl-L-methionine = 2-methyladenosine(2503) in 23S rRNA + 5'-deoxyadenosine + L-methionine + 2 oxidized [2Fe-2S]-[ferredoxin] + S-adenosyl-L-homocysteine. The enzyme catalyses adenosine(37) in tRNA + 2 reduced [2Fe-2S]-[ferredoxin] + 2 S-adenosyl-L-methionine = 2-methyladenosine(37) in tRNA + 5'-deoxyadenosine + L-methionine + 2 oxidized [2Fe-2S]-[ferredoxin] + S-adenosyl-L-homocysteine. In terms of biological role, specifically methylates position 2 of adenine 2503 in 23S rRNA and position 2 of adenine 37 in tRNAs. The chain is Probable dual-specificity RNA methyltransferase RlmN from Lachnospira eligens (strain ATCC 27750 / DSM 3376 / VPI C15-48 / C15-B4) (Eubacterium eligens).